The following is a 447-amino-acid chain: Serine/threonine-protein phosphatase 2A 55 kDa regulatory subunit B alpha isoform (447 aa).

A2 carries the N-acetylalanine modification. 7 WD repeats span residues 11–80, 94–174, 175–218, 227–270, 288–325, 347–381, and 414–446; these read QWCF…FQSH, EKIN…IFAN, AHTY…VDIK, EVIT…KLFE, ISDV…TYQV, ECCW…TLEA, and DFNK…QDKV.

This sequence belongs to the phosphatase 2A regulatory subunit B family. As to quaternary structure, PP2A consists of a common heterodimeric core enzyme, composed of a 36 kDa catalytic subunit (subunit C) and a 65 kDa constant regulatory subunit (PR65 or subunit A), that associates with a variety of regulatory subunits. Proteins that associate with the core dimer include three families of regulatory subunits B (the R2/B/PR55/B55, R3/B''/PR72/PR130/PR59 and R5/B'/B56 families), the 48 kDa variable regulatory subunit, viral proteins, and cell signaling molecules. Interacts with the PP2A C catalytic subunit PPP2CA. Interacts with the PP2A A subunit PPP2R1A. Interacts with TP53. Interacts with IER5. Interacts with MFHAS1; the interaction is direct. Interacts with PABIR1/FAM122A (via its N-terminus); the interaction is direct and inhibits PP2A activity. Interacts with ARPP19; the interaction is direct and inhibits PP2A activity. Interacts with CRTC3. In terms of tissue distribution, expressed in all tissues examined.

In terms of biological role, substrate-recognition subunit of protein phosphatase 2A (PP2A) that plays a key role in cell cycle by controlling mitosis entry and exit. Involved in chromosome clustering during late mitosis by mediating dephosphorylation of MKI67. Essential for serine/threonine-protein phosphatase 2A-mediated dephosphorylation of WEE1, preventing its ubiquitin-mediated proteolysis, increasing WEE1 protein levels, and promoting the G2/M checkpoint. The sequence is that of Serine/threonine-protein phosphatase 2A 55 kDa regulatory subunit B alpha isoform (PPP2R2A) from Homo sapiens (Human).